The chain runs to 451 residues: Cysteine desulfurase (451 aa).

Pyridoxal 5'-phosphate is bound by residues Ala-121, Thr-122, Gln-229, Ser-249, and His-251. The residue at position 252 (Lys-252) is an N6-(pyridoxal phosphate)lysine. Position 289 (Thr-289) interacts with pyridoxal 5'-phosphate. Cys-375 functions as the Cysteine persulfide intermediate in the catalytic mechanism. Cys-375 serves as a coordination point for [2Fe-2S] cluster. Cys-375 contacts Zn(2+). The residue at position 375 (Cys-375) is a Cysteine persulfide.

Belongs to the class-V pyridoxal-phosphate-dependent aminotransferase family. NifS/IscS subfamily. Homodimer. Component of the mitochondrial core iron-sulfur cluster (ISC) complex composed of NFS1, LYRM4, NDUFAB1, ISCU, FXN, and FDX2; this complex is a heterohexamer containing two copies of each monomer. Component of cyteine desulfurase complex composed of NFS1, LYRM4 and NDUFAB1; this complex contributes to the activation of cysteine desulfurase activity and NFS1 stabilization. Interacts (homodimer form) with ISCU (D-state); each monomer interacts with the C-terminal regions of each NFS1 monomer. Interacts with HSPA9. Interacts (via homodimer form) with FDX2. Interacts (via homodimer form) with FXN. Interacts with LYRM4. Component of a complex composed of FXN, NFS1, LYRM4 and ISCU. In terms of assembly, monomer. Homodimer. Oligomer. Interacts with ISCU. Component of the cysteine desulfurase complex composed of NFS1 and LYRM4; this complex contributes to the activation of cysteine desulfurase activity. Interacts with MOCS3. Requires pyridoxal 5'-phosphate as cofactor. In terms of processing, N-gluconoylated. Post-translationally, cysteine persulfide intermediate is reduced by thiol-containing molecules like glutathione and L-cysteine. Persulfide reduction is a rate-limiting step of cysteine desulfurase catalytic cycle.

It is found in the mitochondrion. Its subcellular location is the cytoplasm. The protein localises to the nucleus. It localises to the cytoskeleton. The protein resides in the microtubule organizing center. It is found in the centrosome. It catalyses the reaction (sulfur carrier)-H + L-cysteine = (sulfur carrier)-SH + L-alanine. It carries out the reaction L-cysteinyl-[cysteine desulfurase] + L-cysteine = S-sulfanyl-L-cysteinyl-[cysteine desulfurase] + L-alanine. With respect to regulation, active only in complex with LYRM4. Its function is as follows. Cysteine desulfurase, of the core iron-sulfur cluster (ISC) assembly complex, that catalyzes the desulfuration of L-cysteine to L-alanine, as component of the cysteine desulfurase complex leading to the formation of a cysteine persulfide intermediate at the active site cysteine residue and participates in the [2Fe-2S] clusters assembly on the scaffolding protein ISCU. The persulfide is then transferred on the flexible Cys loop from the catalytic site of NFS1 to the surface of NFS1. After the NFS1-linked persulfide sulfur is transferred to one of the conserved Cys residues of the scaffold, a reaction assisted by FXN. The core iron-sulfur cluster (ISC) assembly complex is involved in the de novo synthesis of a [2Fe-2S] cluster, the first step of the mitochondrial iron-sulfur protein biogenesis. This process is initiated by the cysteine desulfurase complex (NFS1:LYRM4:NDUFAB1) that produces persulfide which is delivered on the scaffold protein ISCU in a FXN-dependent manner. Then this complex is stabilized by FDX2 which provides reducing equivalents to accomplish the [2Fe-2S] cluster assembly. Finally, the [2Fe-2S] cluster is transferred from ISCU to chaperone proteins, including HSCB, HSPA9 and GLRX5. Functionally, may catalyze the desulfuration of L-cysteine to L-alanine as component of the cysteine desulfurase complex (NFS1:LYRM4), leading to the formation of a cysteine persulfide intermediate. Acts as a sulfur donor for MOCS3 by transferring the sulfur of the cysteine persulfide intermediate on MOCS3. The chain is Cysteine desulfurase from Rattus norvegicus (Rat).